The sequence spans 223 residues: MQWALGRRWVWAALLLAAAAVLTQVVWLWLGTQSFVFQHEEIAQLARQYAGLDHELAFSRLIVELRRLHPGHVLPDEELQWVFVNAGGWMGAMCLLHASLSEYVLLFGTALGSRGHSGRYWAEISDTIISGTFHQWREGTTKSEVFYPGETVVHGPGEATAVEWGPNTWMVEYGRGVIPSTLAFALADTIFSTQDFLTLFYTLRAYARGLRLEFTTYLFGQDS.

The Lumenal portion of the chain corresponds to M1 to W9. The tract at residues Q2–R8 is targeting to endoplasmic reticulum-associated lipid droplets. Residues V10–L30 form a helical membrane-spanning segment. Residues G31–S223 are Cytoplasmic-facing. The important for ligand-binding stretch occupies residues S99–L106. Residues V177–S223 form a C-terminal hydrophobic region region.

Belongs to the ERG2 family. As to quaternary structure, homotrimer. Forms a ternary complex with ANK2 and ITPR3. The complex is disrupted by agonists. Interacts with KCNA4. Interacts with KCNA2; cocaine consumption leads to increased interaction. Interacts with RNF112 in an oxidative stress-regulated manner.

It localises to the nucleus inner membrane. It is found in the nucleus outer membrane. Its subcellular location is the nucleus envelope. The protein localises to the cytoplasmic vesicle. The protein resides in the endoplasmic reticulum membrane. It localises to the membrane. It is found in the lipid droplet. Its subcellular location is the cell junction. The protein localises to the cell membrane. The protein resides in the cell projection. It localises to the growth cone. It is found in the postsynaptic density membrane. Its function is as follows. Functions in lipid transport from the endoplasmic reticulum and is involved in a wide array of cellular functions probably through regulation of the biogenesis of lipid microdomains at the plasma membrane. Involved in the regulation of different receptors it plays a role in BDNF signaling and EGF signaling. Also regulates ion channels like the potassium channel and could modulate neurotransmitter release. Plays a role in calcium signaling through modulation together with ANK2 of the ITP3R-dependent calcium efflux at the endoplasmic reticulum. Plays a role in several other cell functions including proliferation, survival and death. Originally identified for its ability to bind various psychoactive drugs it is involved in learning processes, memory and mood alteration. Necessary for proper mitochondrial axonal transport in motor neurons, in particular the retrograde movement of mitochondria. Plays a role in protecting cells against oxidative stress-induced cell death via its interaction with RNF112. The sequence is that of Sigma non-opioid intracellular receptor 1 (SIGMAR1) from Mustela erminea (Ermine).